The following is a 142-amino-acid chain: Nucleoside diphosphate kinase (142 aa).

ATP is bound by residues lysine 11, phenylalanine 59, arginine 87, threonine 93, arginine 104, and asparagine 114. Residue histidine 117 is the Pros-phosphohistidine intermediate of the active site.

It belongs to the NDK family. Homotetramer. The cofactor is Mg(2+).

The protein resides in the cytoplasm. It catalyses the reaction a 2'-deoxyribonucleoside 5'-diphosphate + ATP = a 2'-deoxyribonucleoside 5'-triphosphate + ADP. The catalysed reaction is a ribonucleoside 5'-diphosphate + ATP = a ribonucleoside 5'-triphosphate + ADP. Major role in the synthesis of nucleoside triphosphates other than ATP. The ATP gamma phosphate is transferred to the NDP beta phosphate via a ping-pong mechanism, using a phosphorylated active-site intermediate. The sequence is that of Nucleoside diphosphate kinase from Thiobacillus denitrificans (strain ATCC 25259 / T1).